We begin with the raw amino-acid sequence, 433 residues long: C4-dicarboxylate transport protein (433 aa).

Transmembrane regions (helical) follow at residues isoleucine 8–proline 28, leucine 44–methionine 64, leucine 78–leucine 98, glycine 148–glycine 168, isoleucine 188–isoleucine 208, leucine 222–alanine 242, isoleucine 307–methionine 327, and alanine 355–isoleucine 375.

The protein belongs to the dicarboxylate/amino acid:cation symporter (DAACS) (TC 2.A.23) family.

It is found in the cell inner membrane. In terms of biological role, responsible for the transport of dicarboxylates such as succinate, fumarate, and malate from the periplasm across the membrane. The sequence is that of C4-dicarboxylate transport protein from Cupriavidus taiwanensis (strain DSM 17343 / BCRC 17206 / CCUG 44338 / CIP 107171 / LMG 19424 / R1) (Ralstonia taiwanensis (strain LMG 19424)).